The primary structure comprises 1345 residues: MEQGEASPPVPAEHEAKCDTSNNEEEGELFDFDSGDEVPEADRQVPSADDRTRGAEAGGADENTCPAGNGTGAEPAPEAEPAKLVVPTKVNPYSVIDITPLQEDQPSSPDANTEEEGVGLRVPSGYSVPVPCGYAVPSNLPLLLPAYSSPVIIRAESVEEEEAAETVGDGQCNSLSSEDLPHSSEQGSQEGSALARWAADPANTAWMENPEEAIYDDVPRENSDSEPDEMIYDDVENGEEGGNSSPEYGWSSSEFESYEEPSDSEGKNGIPRSFLRSSHKKQLSHDLTRFKAHCEEKMRGLVASTVGAMEIQQAKQRQERKMQKLMKAAKEGTKDGLEKTKAAVKRGGSFIRTRSLVSQDHRCYFEEEQNLFIDVDCKHPEAVLTPMPEGLSQQQVVRRYILGSIVESEKNYVDALRRILEQYEKPLSEMEPRLLSDRKLRMVFYRVKEILQCHSMFQIALASRVSEWDVVETIGDVFVASFSKSMVLDAYSEYVNNFSTAVAVLKKTCATKPAFLEFLKLSQDSSPDRVTLHSLMMRPIQRFPQFILLLQDMLKNTAKGHPDRLPLQMALTELETLAEKLNERKRDADQRCEIKQIAKAINERYLNKLLSSGNRYLVRSDDVIETVYNDRGEIVKTKQRRIFMLNDVLMCATASSRNSHESHAVMSQRYLLKWSVPLGHVDVIQYNGGSGAGEHCRHHAAHSPESLAVVANAKPHKVYMGPGQLYQDLQNLLHDLNVVGQISQLIGNLRGSYQNLNQSVAHDWTSGLQRLILRKEDAIRAADRCRIQLQLPGKQDKSGRPTFFTAVFNTLTPAIKESWVSSLQMAKLALEEENHMGWFCVDDDGNLAKKETHPLLVGHMPVMVAKQPEFKIECAAYNPEPYLSNESQPASPSTARGFLWIGSCSNQMGQVAIVSFQGSNPKVIECFNVESRILCMVYIPAEESKPQETTETKDPEATASRAPHVPTICLGTEEGSISIYKSSQGCKKVRLQHFYAPDKSTVMSLACSPQGLYAGLVNGSVASYTKAPDGSWNSEPQQVIKLGVLPVRSLLLVEGALWAASGGQVFMASVETHTIENQLEAHQDEGMVISHMAVAGVGIWIAFTSGSTLRLFHTETLKHLQDVNIDAPVHSMLPGHQRLSVTSLLVCHGLLMVGTSLGVVVALPVPRLQGIPKVTGRGMVSYHAHNGPVKFIVSATAFQNKDRARDSPRSGSELQDEDPKDLLCSEEGPSCPGQPDTYTSVWLGDSLGLPTQKNDLSSSSGSLNLSHGSSSLEHRSVDSSLCDLLRDPSASPRSRPQGSRRARASSALVVCGGQGHRRVHRKARQPSQEDLVSSVMVWQIPLLGM.

2 disordered regions span residues 1 to 84 and 99 to 120; these read MEQG…PAKL and TPLQ…GVGL. The segment covering 22–39 has biased composition (acidic residues); it reads NNEEEGELFDFDSGDEVP. Over residues 40–54 the composition is skewed to basic and acidic residues; that stretch reads EADRQVPSADDRTRG. Over residues 102–111 the composition is skewed to polar residues; that stretch reads QEDQPSSPDA. Serine 157 is subject to Phosphoserine. Disordered regions lie at residues 158-195 and 207-273; these read VEEE…SALA and MENP…IPRS. The segment covering 171-191 has biased composition (polar residues); that stretch reads QCNSLSSEDLPHSSEQGSQEG. Over residues 224 to 239 the composition is skewed to acidic residues; sequence DSEPDEMIYDDVENGE. Over residues 242 to 255 the composition is skewed to low complexity; that stretch reads GNSSPEYGWSSSEF. Positions 307–335 form a coiled coil; it reads GAMEIQQAKQRQERKMQKLMKAAKEGTKD. Serine 355 bears the Phosphoserine mark. The 188-residue stretch at 397-584 folds into the DH domain; sequence VRRYILGSIV…ETLAEKLNER (188 aa). Disordered stretches follow at residues 1202–1237 and 1253–1306; these read DRAR…QPDT and KNDL…RASS. The span at 1256–1271 shows a compositional bias: low complexity; it reads LSSSSGSLNLSHGSSS. Serine 1262 is subject to Phosphoserine. Glutamine 1314 carries the post-translational modification N5-methylglutamine.

Post-translationally, methylated at Gln-1314 by N6AMT1. As to expression, ubiquitously expressed.

Functionally, may play a role in developmental myelination of peripheral nerves. The protein is Rho guanine nucleotide exchange factor 10 (Arhgef10) of Mus musculus (Mouse).